A 921-amino-acid polypeptide reads, in one-letter code: Respiratory burst oxidase homolog protein D (921 aa).

Residues 1–71 (MKMRRGNSSN…RSNSVAGGRG (71 aa)) are disordered. Topologically, residues 1–376 (MKMRRGNSSN…KYFILDNWQR (376 aa)) are cytoplasmic. S8, S9, S26, and S39 each carry phosphoserine. Residues 21–31 (NSDTNSDTESI) are compositionally biased toward polar residues. The span at 44-53 (RPKRASKKNA) shows a compositional bias: basic residues. EF-hand-like stretches follow at residues 193-203 (SADSNGLLLSA) and 230-241 (NNVSGDAITKEQ). EF-hand domains follow at residues 253 to 288 (SFDAKLQVFFDMVDKDEDGRVTEEEVAEIISLSASA) and 297 to 332 (QAKEYAALIMEELDPDNAGFIMIENLEMLLLQAPNQ). The Ca(2+) site is built by D266, D268, D270, R272, and E277. 3 positions are modified to phosphoserine: S339, S343, and S347. A helical membrane pass occupies residues 377 to 397 (LWIMMLWLGICGGLFTYKFIQ). Residues 398-461 (YKNKAAYGVM…FDDSLNFHKV (64 aa)) are Extracellular-facing. Positions 415 to 572 (KGGAETLKFN…LFIIVYALLI (158 aa)) constitute a Ferric oxidoreductase domain. Residues 462–482 (IASGIVVGVLLHAGAHLTCDF) traverse the membrane as a helical segment. Topologically, residues 483–516 (PRLIAADEDTYEPMEKYFGDQPTSYWWFVKGVEG) are cytoplasmic. The helical transmembrane segment at 517 to 537 (WTGIVMVVLMAIAFTLATPWF) threads the bilayer. The Extracellular portion of the chain corresponds to 538–559 (RRNKLNLPNFLKKLTGFNAFWY). The chain crosses the membrane as a helical span at residues 560 to 580 (THHLFIIVYALLIVHGIKLYL). The Cytoplasmic segment spans residues 581 to 588 (TKIWYQKT). A helical membrane pass occupies residues 589-606 (TWMYLAVPILLYASERLL). Topologically, residues 607–734 (RAFRSSIKPV…PYGAPAQDYK (128 aa)) are extracellular. The 122-residue stretch at 611–732 (SSIKPVKMIK…DGPYGAPAQD (122 aa)) folds into the FAD-binding FR-type domain. A helical membrane pass occupies residues 735–755 (KYDVVLLVGLGIGATPMISIL). The Cytoplasmic segment spans residues 756-921 (KDIINNMKGP…TKFDFHKENF (166 aa)).

The protein belongs to the RBOH (TC 5.B.1.3) family. In terms of assembly, monomer and homodimer. Interacts with BIK1 and FLS2. Interacts with PBL13. Binds to SIK1 upon flagellin perception and becomes activated by phosphorylation. In terms of processing, phosphorylated at Ser-39, Ser-343 and Ser-347 by BIK1 upon flagellin (flg22) treatment. Activated by phosphorylation at Ser-347 mediated by SIK1 and at Ser-8, Ser-9 and Ser-339 upon flagellin (e.g. flg22) perception. In terms of tissue distribution, more abundant in roots than in leaves, stems or inflorescences. Expressed in mesophyll and guard cells.

It localises to the membrane. Inhibited by diphenylene iodinium (DPI). Calcium-dependent NADPH oxidase that generates superoxide. Involved in the generation of reactive oxygen species (ROS) during incompatible interactions with pathogens, in response to pathogen-associated molecular pattern (PAMP)-triggered immunity (PTI) signaling and in UV-B and abscisic acid ROS-dependent signaling and via SIK1 mediated activation by phosphorylation. Might be required for ROS signal amplification during light stress. This Arabidopsis thaliana (Mouse-ear cress) protein is Respiratory burst oxidase homolog protein D.